A 255-amino-acid polypeptide reads, in one-letter code: Imidazole glycerol phosphate synthase subunit HisF (255 aa).

Active-site residues include Asp11 and Asp130.

Belongs to the HisA/HisF family. As to quaternary structure, heterodimer of HisH and HisF.

It is found in the cytoplasm. The catalysed reaction is 5-[(5-phospho-1-deoxy-D-ribulos-1-ylimino)methylamino]-1-(5-phospho-beta-D-ribosyl)imidazole-4-carboxamide + L-glutamine = D-erythro-1-(imidazol-4-yl)glycerol 3-phosphate + 5-amino-1-(5-phospho-beta-D-ribosyl)imidazole-4-carboxamide + L-glutamate + H(+). Its pathway is amino-acid biosynthesis; L-histidine biosynthesis; L-histidine from 5-phospho-alpha-D-ribose 1-diphosphate: step 5/9. IGPS catalyzes the conversion of PRFAR and glutamine to IGP, AICAR and glutamate. The HisF subunit catalyzes the cyclization activity that produces IGP and AICAR from PRFAR using the ammonia provided by the HisH subunit. This is Imidazole glycerol phosphate synthase subunit HisF from Campylobacter lari (strain RM2100 / D67 / ATCC BAA-1060).